The following is a 182-amino-acid chain: Orotate phosphoribosyltransferase (182 aa).

5-phospho-alpha-D-ribose 1-diphosphate-binding positions include Arg-96, Lys-97, Lys-100, His-102, and Glu-122–Ser-130. Thr-126 and Arg-154 together coordinate orotate.

This sequence belongs to the purine/pyrimidine phosphoribosyltransferase family. PyrE subfamily. In terms of assembly, homodimer. It depends on Mg(2+) as a cofactor.

The enzyme catalyses orotidine 5'-phosphate + diphosphate = orotate + 5-phospho-alpha-D-ribose 1-diphosphate. It participates in pyrimidine metabolism; UMP biosynthesis via de novo pathway; UMP from orotate: step 1/2. Catalyzes the transfer of a ribosyl phosphate group from 5-phosphoribose 1-diphosphate to orotate, leading to the formation of orotidine monophosphate (OMP). The chain is Orotate phosphoribosyltransferase from Streptomyces avermitilis (strain ATCC 31267 / DSM 46492 / JCM 5070 / NBRC 14893 / NCIMB 12804 / NRRL 8165 / MA-4680).